The following is a 175-amino-acid chain: Crossover junction endodeoxyribonuclease RuvC (175 aa).

Residues D16, E76, and D148 contribute to the active site. Mg(2+)-binding residues include D16, E76, and D148.

The protein belongs to the RuvC family. Homodimer which binds Holliday junction (HJ) DNA. The HJ becomes 2-fold symmetrical on binding to RuvC with unstacked arms; it has a different conformation from HJ DNA in complex with RuvA. In the full resolvosome a probable DNA-RuvA(4)-RuvB(12)-RuvC(2) complex forms which resolves the HJ. Mg(2+) serves as cofactor.

Its subcellular location is the cytoplasm. The catalysed reaction is Endonucleolytic cleavage at a junction such as a reciprocal single-stranded crossover between two homologous DNA duplexes (Holliday junction).. In terms of biological role, the RuvA-RuvB-RuvC complex processes Holliday junction (HJ) DNA during genetic recombination and DNA repair. Endonuclease that resolves HJ intermediates. Cleaves cruciform DNA by making single-stranded nicks across the HJ at symmetrical positions within the homologous arms, yielding a 5'-phosphate and a 3'-hydroxyl group; requires a central core of homology in the junction. The consensus cleavage sequence is 5'-(A/T)TT(C/G)-3'. Cleavage occurs on the 3'-side of the TT dinucleotide at the point of strand exchange. HJ branch migration catalyzed by RuvA-RuvB allows RuvC to scan DNA until it finds its consensus sequence, where it cleaves and resolves the cruciform DNA. In Bradyrhizobium sp. (strain ORS 278), this protein is Crossover junction endodeoxyribonuclease RuvC.